A 335-amino-acid chain; its full sequence is 2-acylglycerol O-acyltransferase 2-A (335 aa).

Transmembrane regions (helical) follow at residues 24 to 44 and 47 to 67; these read WVFSFLALAQTCILLFFVLLF and FWIISVVYGVWWFLDWDTPSK.

It belongs to the diacylglycerol acyltransferase family.

Its subcellular location is the endoplasmic reticulum membrane. The protein resides in the cytoplasm. It localises to the perinuclear region. The enzyme catalyses a 2-acylglycerol + an acyl-CoA = a 1,2-diacylglycerol + CoA. It catalyses the reaction a 2-acylglycerol + an acyl-CoA = a 1,2-diacyl-sn-glycerol + CoA. It carries out the reaction a 2-acylglycerol + an acyl-CoA = a 2,3-diacyl-sn-glycerol + CoA. The catalysed reaction is a 1-acylglycerol + an acyl-CoA = a 1,2-diacylglycerol + CoA. The enzyme catalyses a 1-acylglycerol + an acyl-CoA = a 1,3-diacylglycerol + CoA. It catalyses the reaction 1-O-alkylglycerol + an acyl-CoA = 1-O-alkyl-3-acylglycerol + CoA. It carries out the reaction an acyl-CoA + a 1,2-diacyl-sn-glycerol = a triacyl-sn-glycerol + CoA. It participates in glycerolipid metabolism; triacylglycerol biosynthesis. Its function is as follows. Catalyzes the formation of diacylglycerol from 2-monoacylglycerol and fatty acyl-CoA. In terms of biological role, involved in glycerolipid synthesis and lipid metabolism. Catalyzes the formation of diacylglycerol, the precursor of triacylglycerol, by transferring the acyl chain of a fatty acyl-CoA to a monoacylglycerol. Plays a central role in absorption of dietary fat in the small intestine by catalyzing the resynthesis of triacylglycerol in enterocytes. Has a preference toward monoacylglycerols containing unsaturated fatty acids in an order of C18:3 &gt; C18:2 &gt; C18:1 &gt; C18:0 at sn-2. Able to use 1-monoalkylglycerol (1-MAkG, 1-O-alkylglycerol) as an acyl acceptor for the synthesis of monoalkyl-monoacylglycerol (MAMAG, 1-O-alkyl-3-acylglycerol or 1-O-alkyl-2-acylglycerol) and subsequently, with lower efficiency, may add another acyl chain producing monoalkyl-diacylglycerol (MADAG, 1-O-alkyl-2,3-diacylglycerol). Possesses weak but significant activity with diacylglycerol as substrate, producing triacylglycerol (triacyl-sn-glycerol). The chain is 2-acylglycerol O-acyltransferase 2-A (mogat2-a) from Xenopus laevis (African clawed frog).